The primary structure comprises 688 residues: Amino-acid acetyltransferase, mitochondrial (688 aa).

A mitochondrion-targeting transit peptide spans 1–45; that stretch reads MSSRALTWPRTAKSSLLKQQTSSFVGQPKLGTPNCRSFSSTADRP. Disordered regions lie at residues 1–59 and 96–119; these read MSSR…SKSY and LKAQHPPKAQTEPTTGHSKGTVTQ. Polar residues-rich tracts occupy residues 12 to 25, 34 to 57, and 106 to 119; these read AKSSLLKQQTSSFV, NCRSFSSTADRPINQSAEFSSSSK, and TEPTTGHSKGTVTQ. An N-acetyltransferase domain is found at 509–678; it reads NRPRLSLDDP…YEQVCRSIQP (170 aa).

This sequence belongs to the acetyltransferase family.

Its subcellular location is the mitochondrion. It catalyses the reaction L-glutamate + acetyl-CoA = N-acetyl-L-glutamate + CoA + H(+). It functions in the pathway amino-acid biosynthesis; L-arginine biosynthesis; N(2)-acetyl-L-ornithine from L-glutamate: step 1/4. Functionally, N-acetylglutamate synthase involved in arginine biosynthesis. The chain is Amino-acid acetyltransferase, mitochondrial (arg2) from Aspergillus flavus (strain ATCC 200026 / FGSC A1120 / IAM 13836 / NRRL 3357 / JCM 12722 / SRRC 167).